The sequence spans 385 residues: Calcium/calmodulin-dependent protein kinase type 1D (385 aa).

Positions 23 to 279 (FEFKETLGTG…CEQAARHPWI (257 aa)) constitute a Protein kinase domain. Residues 29 to 37 (LGTGAFSEV) and K52 contribute to the ATP site. A Glycyl lysine isopeptide (Lys-Gly) (interchain with G-Cter in SUMO2) cross-link involves residue K113. The residue at position 122 (S122) is a Phosphoserine. The active-site Proton acceptor is the D144. T180 is modified (phosphothreonine; by CaMKK1 and CaMKK2). An autoinhibitory domain region spans residues 279–319 (IAGDTALNKNIHESVSAQIRKNFAKSKWRQAFNATAVVRHM). The tract at residues 299 to 320 (KNFAKSKWRQAFNATAVVRHMR) is calmodulin-binding. The Nuclear export signal motif lies at 318 to 324 (HMRKLHL). The disordered stretch occupies residues 360–385 (SSGVSGVGAERRPRPTTVTAVHSGSK). Over residues 375–385 (TTVTAVHSGSK) the composition is skewed to polar residues.

This sequence belongs to the protein kinase superfamily. CAMK Ser/Thr protein kinase family. CaMK subfamily. Widely expressed. Highly and mostly expressed in polymorphonuclear leukocytes (neutrophilic and eosinophilic granulocytes) while little or no expression is observed in monocytes and lymphocytes.

The protein localises to the cytoplasm. It is found in the nucleus. It carries out the reaction L-seryl-[protein] + ATP = O-phospho-L-seryl-[protein] + ADP + H(+). The enzyme catalyses L-threonyl-[protein] + ATP = O-phospho-L-threonyl-[protein] + ADP + H(+). Its activity is regulated as follows. Activated by Ca(2+)/calmodulin. Binding of calmodulin results in conformational change that relieves intrasteric autoinhibition and allows phosphorylation of Thr-180 within the activation loop by CaMKK1 or CaMKK2. Phosphorylation of Thr-180 results in several fold increase in total activity. Unlike CaMK4, may be unable to exhibit autonomous activity after Ca(2+)/calmodulin activation. Functionally, calcium/calmodulin-dependent protein kinase that operates in the calcium-triggered CaMKK-CaMK1 signaling cascade and, upon calcium influx, activates CREB-dependent gene transcription, regulates calcium-mediated granulocyte function and respiratory burst and promotes basal dendritic growth of hippocampal neurons. In neutrophil cells, required for cytokine-induced proliferative responses and activation of the respiratory burst. Activates the transcription factor CREB1 in hippocampal neuron nuclei. May play a role in apoptosis of erythroleukemia cells. In vitro, phosphorylates transcription factor CREM isoform Beta. This chain is Calcium/calmodulin-dependent protein kinase type 1D (CAMK1D), found in Homo sapiens (Human).